Reading from the N-terminus, the 175-residue chain is MSRVAKKPISVPKGVEVSVRSDMLTVKGVKGVLTFPKSDNVNVVVDGDILTLSANDPSHVSLAGTVRAILSNMIKGVSIGFERKLELVGVGYRASMQGENLNLSLGFSHPLVFVPPEGITLLTPSQTEVVVQGIDKQRVGEVAAKIRSFRPPEPYKGKGLKYAAEAIMRKEAKKA.

Belongs to the universal ribosomal protein uL6 family. In terms of assembly, part of the 50S ribosomal subunit.

In terms of biological role, this protein binds to the 23S rRNA, and is important in its secondary structure. It is located near the subunit interface in the base of the L7/L12 stalk, and near the tRNA binding site of the peptidyltransferase center. This is Large ribosomal subunit protein uL6 from Xylella fastidiosa (strain 9a5c).